We begin with the raw amino-acid sequence, 142 residues long: Small ribosomal subunit protein bS16 (142 aa).

The segment at 101-142 (RPSFDALGGDDAGKGEAITQKKKAEKKDEAAAESSSSESTEA) is disordered. Low complexity predominate over residues 132-142 (AESSSSESTEA).

It belongs to the bacterial ribosomal protein bS16 family.

The chain is Small ribosomal subunit protein bS16 from Streptomyces avermitilis (strain ATCC 31267 / DSM 46492 / JCM 5070 / NBRC 14893 / NCIMB 12804 / NRRL 8165 / MA-4680).